A 247-amino-acid chain; its full sequence is tRNA1(Val) (adenine(37)-N6)-methyltransferase (247 aa).

Belongs to the methyltransferase superfamily. tRNA (adenine-N(6)-)-methyltransferase family.

It is found in the cytoplasm. The catalysed reaction is adenosine(37) in tRNA1(Val) + S-adenosyl-L-methionine = N(6)-methyladenosine(37) in tRNA1(Val) + S-adenosyl-L-homocysteine + H(+). In terms of biological role, specifically methylates the adenine in position 37 of tRNA(1)(Val) (anticodon cmo5UAC). The polypeptide is tRNA1(Val) (adenine(37)-N6)-methyltransferase (Edwardsiella ictaluri (strain 93-146)).